A 509-amino-acid polypeptide reads, in one-letter code: UDP-N-acetylmuramyl-tripeptide synthetase (509 aa).

Residue 124–130 coordinates ATP; that stretch reads GTNGKTS. Residues 164-165, Ser191, and Arg199 contribute to the UDP-N-acetyl-alpha-D-muramoyl-L-alanyl-D-glutamate site; that span reads TT. An N6-carboxylysine modification is found at Lys231.

It belongs to the MurCDEF family. MurE subfamily. Post-translationally, carboxylation is probably crucial for Mg(2+) binding and, consequently, for the gamma-phosphate positioning of ATP.

Its subcellular location is the cytoplasm. It functions in the pathway cell wall biogenesis; peptidoglycan biosynthesis. In terms of biological role, catalyzes the addition of an amino acid to the nucleotide precursor UDP-N-acetylmuramoyl-L-alanyl-D-glutamate (UMAG) in the biosynthesis of bacterial cell-wall peptidoglycan. This chain is UDP-N-acetylmuramyl-tripeptide synthetase, found in Tropheryma whipplei (strain Twist) (Whipple's bacillus).